Consider the following 62-residue polypeptide: Translational regulator CsrA 3 (62 aa).

Belongs to the CsrA/RsmA family. In terms of assembly, homodimer; the beta-strands of each monomer intercalate to form a hydrophobic core, while the alpha-helices form wings that extend away from the core.

It localises to the cytoplasm. A key translational regulator that binds mRNA to regulate translation initiation and/or mRNA stability. Mediates global changes in gene expression, shifting from rapid growth to stress survival by linking envelope stress, the stringent response and the catabolite repression systems. Usually binds in the 5'-UTR; binding at or near the Shine-Dalgarno sequence prevents ribosome-binding, repressing translation, binding elsewhere in the 5'-UTR can activate translation and/or stabilize the mRNA. Its function is antagonized by small RNA(s). The chain is Translational regulator CsrA 3 from Pseudomonas syringae pv. tomato (strain ATCC BAA-871 / DC3000).